The following is a 93-amino-acid chain: Acylphosphatase (93 aa).

C5 and C49 are disulfide-bonded. Residues 5–93 (CIIAWVYGRV…ETLTGFSIRY (89 aa)) form the Acylphosphatase-like domain. Catalysis depends on residues R20 and N38.

This sequence belongs to the acylphosphatase family.

The catalysed reaction is an acyl phosphate + H2O = a carboxylate + phosphate + H(+). This Salmonella typhi protein is Acylphosphatase.